Here is a 1205-residue protein sequence, read N- to C-terminus: Nitric oxide synthase 3 (1205 aa).

The disordered stretch occupies residues 1–73 (MGNLKSVGQE…PPEGPKFPRV (73 aa)). The N-myristoyl glycine moiety is linked to residue glycine 2. S-palmitoyl cysteine attachment occurs at residues cysteine 15 and cysteine 26. A compositionally biased stretch (gly residues) spans 15–27 (CGLGLGLGLGLCG). Residues 33–47 (SPAPEPSRAPAPATP) show a composition bias toward pro residues. 2 residues coordinate Zn(2+): cysteine 96 and cysteine 101. Residues 100–488 (CCLGSLVLPR…PDPWKGSATK (389 aa)) form an interaction with NOSIP region. Residue serine 104 coordinates (6R)-L-erythro-5,6,7,8-tetrahydrobiopterin. Position 116 is a phosphoserine; by CDK5 (serine 116). Cysteine 186 is a heme b binding site. L-arginine contacts are provided by glutamine 249, tryptophan 358, tyrosine 359, glutamate 363, and asparagine 368. (6R)-L-erythro-5,6,7,8-tetrahydrobiopterin contacts are provided by alanine 448, tryptophan 449, and phenylalanine 462. Tyrosine 477 lines the heme b pocket. The interval 492 to 512 (ITRKKTFKEVANAVKISASLM) is calmodulin-binding. Threonine 497 is subject to Phosphothreonine; by AMPK and PKA. The Flavodoxin-like domain maps to 522–705 (ATILYASETG…AFRGWAKAAF (184 aa)). 6 residues coordinate FMN: serine 528, glutamate 529, threonine 530, arginine 532, serine 574, and threonine 575. A phosphoserine mark is found at serine 617, serine 635, and serine 640. Residues serine 656, cysteine 663, glutamate 689, and glutamine 693 each contribute to the FMN site. Positions 758 to 1004 (RKMFQATVLS…IRGAPSFRLP (247 aa)) constitute an FAD-binding FR-type domain. Position 778 (arginine 778) interacts with NADP(+). FAD is bound at residue histidine 800. The disordered stretch occupies residues 820–847 (EDPPPPTESVAVEQLEKGSPGGPPPSWV). Residue serine 838 is modified to Phosphoserine. FAD is bound by residues arginine 940, tyrosine 942, serine 943, threonine 958, alanine 960, tyrosine 964, valine 977, cysteine 978, and serine 979. Threonine 1018, arginine 1051, serine 1080, arginine 1081, lysine 1087, tyrosine 1089, and glutamine 1091 together coordinate NADP(+). Threonine 1177 carries the post-translational modification Phosphothreonine. Serine 1179 is modified (phosphoserine; by AMPK, PDPK1 and PKA). Position 1181 is a phosphoserine (serine 1181).

This sequence belongs to the NOS family. In terms of assembly, homodimer. Interacts with NOSIP and NOSTRIN. Interacts with HSP90AB1. Forms a complex with ASL, ASS1 and SLC7A1; the complex regulates cell-autonomous L-arginine synthesis and citrulline recycling while channeling extracellular L-arginine to nitric oxide synthesis pathway. It depends on heme b as a cofactor. FAD serves as cofactor. Requires FMN as cofactor. The cofactor is (6R)-L-erythro-5,6,7,8-tetrahydrobiopterin. Phosphorylation by AMPK at Ser-1179 in the presence of Ca(2+)-calmodulin (CaM) activates activity. In absence of Ca(2+)-calmodulin, AMPK also phosphorylates Thr-497, resulting in inhibition of activity. Phosphorylation of Ser-116 by CDK5 reduces activity.

The protein resides in the cell membrane. It localises to the membrane. It is found in the caveola. The protein localises to the cytoplasm. Its subcellular location is the cytoskeleton. The protein resides in the golgi apparatus. The catalysed reaction is 2 L-arginine + 3 NADPH + 4 O2 + H(+) = 2 L-citrulline + 2 nitric oxide + 3 NADP(+) + 4 H2O. Its activity is regulated as follows. Stimulated by calcium/calmodulin. Inhibited by NOSIP and NOSTRIN. In terms of biological role, produces nitric oxide (NO) which is implicated in vascular smooth muscle relaxation through a cGMP-mediated signal transduction pathway. NO mediates vascular endothelial growth factor (VEGF)-induced angiogenesis in coronary vessels and promotes blood clotting through the activation of platelets. This chain is Nitric oxide synthase 3 (NOS3), found in Bos taurus (Bovine).